The sequence spans 481 residues: Glutamyl-tRNA(Gln) amidotransferase subunit A (481 aa).

Catalysis depends on charge relay system residues Lys-77 and Ser-151. The Acyl-ester intermediate role is filled by Ser-175.

This sequence belongs to the amidase family. GatA subfamily. Heterotrimer of A, B and C subunits.

It carries out the reaction L-glutamyl-tRNA(Gln) + L-glutamine + ATP + H2O = L-glutaminyl-tRNA(Gln) + L-glutamate + ADP + phosphate + H(+). In terms of biological role, allows the formation of correctly charged Gln-tRNA(Gln) through the transamidation of misacylated Glu-tRNA(Gln) in organisms which lack glutaminyl-tRNA synthetase. The reaction takes place in the presence of glutamine and ATP through an activated gamma-phospho-Glu-tRNA(Gln). This chain is Glutamyl-tRNA(Gln) amidotransferase subunit A, found in Rubrobacter xylanophilus (strain DSM 9941 / JCM 11954 / NBRC 16129 / PRD-1).